A 338-amino-acid polypeptide reads, in one-letter code: MDPRSEVVLRQQQYLAIKILLINPPADELAQQLAHKHQVSVWTWNFADHQYFQHQSIQSDFAVTFPDQIPDQVIIFVPKSKELLSYLLHVVVSHLPAGQHIFLVGEKKGGVERASKQLQSYGKTVKLDSARHCQLWQTTIETTEQLKPLEQWLKHYSVKNENIQLEIYALPGVFSQNHLDIGTAVLLPYLNQIKLGKIADFGCGAGVISAYLAQLSPHNEIHALDIDAFALRSTEFTFQRNGLASERLHLHAVTGIQDAPKALDVIVSNPPFHQGIHTDYSASEGLCKTAKQHLNTSGELWIVANRFLNYPLLIEQTFGQCQVKTDQQGFKILYAKAT.

This sequence belongs to the methyltransferase superfamily. RsmC family. As to quaternary structure, monomer.

The protein localises to the cytoplasm. The catalysed reaction is guanosine(1207) in 16S rRNA + S-adenosyl-L-methionine = N(2)-methylguanosine(1207) in 16S rRNA + S-adenosyl-L-homocysteine + H(+). In terms of biological role, specifically methylates the guanine in position 1207 of 16S rRNA in the 30S particle. In Acinetobacter baylyi (strain ATCC 33305 / BD413 / ADP1), this protein is Ribosomal RNA small subunit methyltransferase C.